We begin with the raw amino-acid sequence, 526 residues long: Dolichyl pyrophosphate Glc1Man9GlcNAc2 alpha-1,3-glucosyltransferase (526 aa).

Transmembrane regions (helical) follow at residues 9–29 (AGGH…CLLI), 108–128 (FSVI…CKCI), 143–163 (FILS…HIHF), 188–208 (GALL…VAPA), 238–258 (VTSL…PFLA), 334–354 (PLAT…CLWF), 361–380 (GFLR…GWHV), 400–422 (AGDA…PLLF), 427–449 (LPIK…KTLF), 461–481 (TVYL…LPFT), and 487–507 (YPFI…TYAW).

Belongs to the ALG6/ALG8 glucosyltransferase family.

It is found in the endoplasmic reticulum membrane. It carries out the reaction an alpha-D-Glc-(1-&gt;3)-alpha-D-Man-(1-&gt;2)-alpha-D-Man-(1-&gt;2)-alpha-D-Man-(1-&gt;3)-[alpha-D-Man-(1-&gt;2)-alpha-D-Man-(1-&gt;3)-[alpha-D-Man-(1-&gt;2)-alpha-D-Man-(1-&gt;6)]-alpha-D-Man-(1-&gt;6)]-beta-D-Man-(1-&gt;4)-beta-D-GlcNAc-(1-&gt;4)-alpha-D-GlcNAc-diphospho-di-trans,poly-cis-dolichol + a di-trans,poly-cis-dolichyl beta-D-glucosyl phosphate = an alpha-D-Glc-(1-&gt;3)-alpha-D-Glc-(1-&gt;3)-alpha-D-Man-(1-&gt;2)-alpha-D-Man-(1-&gt;2)-alpha-D-Man-(1-&gt;3)-[alpha-D-Man-(1-&gt;2)-alpha-D-Man-(1-&gt;3)-[alpha-D-Man-(1-&gt;2)-alpha-D-Man-(1-&gt;6)]-alpha-D-Man-(1-&gt;6)]-beta-D-Man-(1-&gt;4)-beta-D-GlcNAc-(1-&gt;4)-alpha-D-GlcNAc-diphospho-di-trans,poly-cis-dolichol + a di-trans,poly-cis-dolichyl phosphate + H(+). The protein operates within protein modification; protein glycosylation. Its function is as follows. Dolichyl pyrophosphate Glc1Man9GlcNAc2 alpha-1,3-glucosyltransferase that operates in the biosynthetic pathway of dolichol-linked oligosaccharides, the glycan precursors employed in protein asparagine (N)-glycosylation. The assembly of dolichol-linked oligosaccharides begins on the cytosolic side of the endoplasmic reticulum membrane and finishes in its lumen. The sequential addition of sugars to dolichol pyrophosphate produces dolichol-linked oligosaccharides containing fourteen sugars, including two GlcNAcs, nine mannoses and three glucoses. Once assembled, the oligosaccharide is transferred from the lipid to nascent proteins by oligosaccharyltransferases. In the lumen of the endoplasmic reticulum, adds the second glucose residue from dolichyl phosphate glucose (Dol-P-Glc) onto the lipid-linked oligosaccharide intermediate Glc(1)Man(9)GlcNAc(2)-PP-Dol to produce Glc(2)Man(9)GlcNAc(2)-PP-Dol. Glc(2)Man(9)GlcNAc(2)-PP-Dol is a substrate for ALG10, the following enzyme in the biosynthetic pathway. Required for PKD1/Polycystin-1 maturation and localization to the plasma membrane of the primary cilia. This Mus musculus (Mouse) protein is Dolichyl pyrophosphate Glc1Man9GlcNAc2 alpha-1,3-glucosyltransferase.